The sequence spans 260 residues: uncharacterized protein (260 aa).

An N-terminal signal peptide occupies residues 1-22 (MGYIKRIGLYISIFILIVMVAG). Cys-23 carries N-palmitoyl cysteine lipidation. The S-diacylglycerol cysteine moiety is linked to residue Cys-23.

This sequence belongs to the staphylococcal tandem lipoprotein family.

It is found in the cell membrane. This is an uncharacterized protein from Staphylococcus aureus (strain bovine RF122 / ET3-1).